Reading from the N-terminus, the 196-residue chain is UMP-CMP kinase (196 aa).

13–18 (GAGKGT) provides a ligand contact to ATP. Serine 33 carries the phosphoserine modification. An NMP region spans residues 33 to 63 (SAGELLRDERKNPDSQYGELIEKYIKDGKIV). An a ribonucleoside 5'-phosphate-binding site is contributed by arginine 39. 2 positions are modified to N6-acetyllysine: lysine 43 and lysine 55. A ribonucleoside 5'-phosphate is bound by residues 61 to 63 (KIV) and 93 to 96 (GFPR). CMP is bound at residue asparagine 100. Position 106 is an N6-succinyllysine (lysine 106). Residues 133 to 143 (ERGKSSGRSDD) form an LID region. Arginine 134 is a binding site for ATP. Positions 140 and 151 each coordinate a ribonucleoside 5'-phosphate. An ATP-binding site is contributed by lysine 179. Serine 180 is modified (phosphoserine).

This sequence belongs to the adenylate kinase family. UMP-CMP kinase subfamily. As to quaternary structure, monomer. It depends on Mg(2+) as a cofactor.

The protein resides in the nucleus. Its subcellular location is the cytoplasm. It carries out the reaction CMP + ATP = CDP + ADP. The catalysed reaction is dCMP + ATP = dCDP + ADP. The enzyme catalyses UMP + ATP = UDP + ADP. It catalyses the reaction a 2'-deoxyribonucleoside 5'-diphosphate + ATP = a 2'-deoxyribonucleoside 5'-triphosphate + ADP. It carries out the reaction a ribonucleoside 5'-diphosphate + ATP = a ribonucleoside 5'-triphosphate + ADP. Functionally, catalyzes the phosphorylation of pyrimidine nucleoside monophosphates at the expense of ATP. Plays an important role in de novo pyrimidine nucleotide biosynthesis. Has preference for UMP and CMP as phosphate acceptors. Also displays broad nucleoside diphosphate kinase activity. The sequence is that of UMP-CMP kinase from Sus scrofa (Pig).